The following is a 781-amino-acid chain: Homeobox protein SIX4 (781 aa).

Residues 1–10 show a composition bias toward polar residues; it reads MSSSSPTGQI. 2 disordered regions span residues 1–55 and 270–321; these read MSSS…PLEP and WFKN…GITN. At serine 2 the chain carries N-acetylserine. A DNA-binding region (homeobox) is located at residues 223-282; that stretch reads GEETVYCFKEKSRNALKELYKQNRYPSPAEKRHLAKITGLSLTQVSNWFKNRRQRDRNPS. Basic and acidic residues-rich tracts occupy residues 278–290 and 299–308; these read DRNPSETQSKSES and ESSKGHEDLS. At serine 640 the chain carries Phosphoserine.

The protein belongs to the SIX/Sine oculis homeobox family. As to quaternary structure, interacts with EYA3; acts cooperatively with EYA3 to transactivate target genes through interaction and nuclear translocation of EYA3 protein.

The protein localises to the nucleus. It is found in the cytoplasm. Transcriptional regulator which can act as both a transcriptional repressor and activator by binding a DNA sequence on these target genes and is involved in processes like cell differentiation, cell migration and cell survival. Transactivates gene expression by binding a 5'-[CAT]A[CT][CT][CTG]GA[GAT]-3' motif present in the Trex site and a 5'-TCA[AG][AG]TTNC-3' motif present in the MEF3 site of the muscle-specific genes enhancer. Acts cooperatively with EYA proteins to transactivate their target genes through interaction and nuclear translocation of EYA protein. Acts synergistically with SIX1 to regulate target genes involved in formation of various organs, including muscle, kidney, gonad, ganglia, olfactory epithelium and cranial skeleton. Plays a role in several important steps of muscle development. Controls the genesis of hypaxial myogenic progenitors in the dermomyotome by transactivating PAX3 and the delamination and migration of the hypaxial precursors from the ventral lip to the limb buds through the transactivation of PAX3, MET and LBX1. Controls myoblast determination by transactivating MYF5, MYOD1 and MYF6. Controls somitic differentiation in myocyte through MYOG transactivation. Plays a role in synaptogenesis and sarcomere organization by participating in myofiber specialization during embryogenesis by activating fast muscle program in the primary myotome resulting in an up-regulation of fast muscle genes, including ATP2A1, MYL1 and TNNT3. Simultaneously, is also able to activate inhibitors of slow muscle genes, such as SOX6, HRASLS, and HDAC4, thereby restricting the activation of the slow muscle genes. During muscle regeneration, negatively regulates differentiation of muscle satellite cells through down-regulation of MYOG expression. During kidney development regulates the early stages of metanephros development and ureteric bud formation through regulation of GDNF, SALL1, PAX8 and PAX2 expression. Plays a role in gonad development by regulating both testis determination and size determination. In gonadal sex determination, transactivates ZFPM2 by binding a MEF3 consensus sequence, resulting in SRY up-regulation. In gonadal size determination, transactivates NR5A1 by binding a MEF3 consensus sequence resulting in gonadal precursor cell formation regulation. During olfactory development mediates the specification and patterning of olfactory placode through fibroblast growth factor and BMP4 signaling pathways and also regulates epithelial cell proliferation during placode formation. Promotes survival of sensory neurons during early trigeminal gangliogenesis. In the developing dorsal root ganglia, up-regulates SLC12A2 transcription. Regulates early thymus/parathyroid organogenesis through regulation of GCM2 and FOXN1 expression. Forms gustatory papillae during development of the tongue. Also plays a role during embryonic cranial skeleton morphogenesis. This chain is Homeobox protein SIX4 (SIX4), found in Homo sapiens (Human).